We begin with the raw amino-acid sequence, 282 residues long: Pantothenate synthetase (282 aa).

Position 30-37 (30-37 (MGALHAGH)) interacts with ATP. The active-site Proton donor is the histidine 37. Glutamine 61 contributes to the (R)-pantoate binding site. Residue glutamine 61 coordinates beta-alanine. Residue 147-150 (GEKD) coordinates ATP. Position 153 (glutamine 153) interacts with (R)-pantoate. ATP is bound by residues valine 176 and 184–187 (LSSR).

It belongs to the pantothenate synthetase family. In terms of assembly, homodimer.

The protein resides in the cytoplasm. It carries out the reaction (R)-pantoate + beta-alanine + ATP = (R)-pantothenate + AMP + diphosphate + H(+). Its pathway is cofactor biosynthesis; (R)-pantothenate biosynthesis; (R)-pantothenate from (R)-pantoate and beta-alanine: step 1/1. In terms of biological role, catalyzes the condensation of pantoate with beta-alanine in an ATP-dependent reaction via a pantoyl-adenylate intermediate. This chain is Pantothenate synthetase, found in Bacteroides fragilis (strain ATCC 25285 / DSM 2151 / CCUG 4856 / JCM 11019 / LMG 10263 / NCTC 9343 / Onslow / VPI 2553 / EN-2).